The primary structure comprises 115 residues: NADH-ubiquinone oxidoreductase chain 3 (115 aa).

Transmembrane regions (helical) follow at residues 4-24 (LTVL…AFWL), 55-75 (FFLV…LLPL), and 87-107 (MMLT…YEWM).

Belongs to the complex I subunit 3 family. Core subunit of respiratory chain NADH dehydrogenase (Complex I) which is composed of 45 different subunits. Interacts with TMEM186. Interacts with TMEM242.

The protein resides in the mitochondrion inner membrane. The enzyme catalyses a ubiquinone + NADH + 5 H(+)(in) = a ubiquinol + NAD(+) + 4 H(+)(out). Its function is as follows. Core subunit of the mitochondrial membrane respiratory chain NADH dehydrogenase (Complex I) which catalyzes electron transfer from NADH through the respiratory chain, using ubiquinone as an electron acceptor. Essential for the catalytic activity of complex I. The polypeptide is NADH-ubiquinone oxidoreductase chain 3 (Peromyscus slevini (Slevin's mouse)).